Consider the following 261-residue polypeptide: MDTLTSAPLLTTKFKPSFSPQQKPCFPHRRRFENGKKNQSIVPVARLFGPAIFEASKLKVLFLGIDENKHPGNLPRTYTLTHSDVTSKLTLAISQTINNSQLQGWYNRLQRDEVVAQWKKVKGKMSLHVHCHISGGHFLLDIFARLRYFIFCKELPVVLKAFVHGDGNLFNNYPELEESLVWVFFHSKIREFNKVECWGPLKEASQPTSGTHSDLKLPQSCEEDCECCFPPLNLSPIPCSNEVINNTYEPIDGIGTQHGNL.

The transit peptide at 1–54 (MDTLTSAPLLTTKFKPSFSPQQKPCFPHRRRFENGKKNQSIVPVARLFGPAIFE) directs the protein to the chloroplast.

The protein belongs to the staygreen family.

Its subcellular location is the plastid. It localises to the chloroplast. Probably involved in the disassembling mechanism of the intact light-harvesting complex of photosystem II (LHCII) in the thylakoid membranes. Required for the chlorophyll breakdown pathway. Acts independent and upstream of pheophorbide a oxygenase (PAO). The polypeptide is Protein STAY-GREEN, chloroplastic (SGR) (Pisum sativum (Garden pea)).